Consider the following 779-residue polypeptide: Protein WEAK CHLOROPLAST MOVEMENT UNDER BLUE LIGHT-like 1 (779 aa).

The segment at 1–119 (MEDLKTTDAL…NAVSPRPLYS (119 aa)) is disordered. Residues 79–88 (DSPTTPSFVS) are compositionally biased toward polar residues. Phosphoserine is present on Ser-139. 3 coiled-coil regions span residues 182 to 503 (RMKV…KQRE), 532 to 587 (KETR…ESRL), and 657 to 715 (AVSE…KWRE). Positions 650 to 661 (ANARVAAAVSEV) are enriched in low complexity. Disordered stretches follow at residues 650–674 (ANARVAAAVSEVGEAKETEKRSLEK) and 694–759 (EKAE…NPVK). Composition is skewed to basic and acidic residues over residues 662–674 (GEAKETEKRSLEK) and 694–718 (EKAEKAKEGKLGVEQELRKWREVSE). A compositionally biased stretch (polar residues) spans 741–753 (TSVSNETETNPIP).

The protein belongs to the WEB family.

The polypeptide is Protein WEAK CHLOROPLAST MOVEMENT UNDER BLUE LIGHT-like 1 (WEL1) (Arabidopsis thaliana (Mouse-ear cress)).